A 254-amino-acid chain; its full sequence is tRNA (guanine-N(7)-)-methyltransferase (254 aa).

Positions M1 to G34 are disordered. Positions 87, 112, 139, and 162 each coordinate S-adenosyl-L-methionine. The active site involves D162. Residues K166, D198, and T233 to E236 contribute to the substrate site.

It belongs to the class I-like SAM-binding methyltransferase superfamily. TrmB family.

The catalysed reaction is guanosine(46) in tRNA + S-adenosyl-L-methionine = N(7)-methylguanosine(46) in tRNA + S-adenosyl-L-homocysteine. It participates in tRNA modification; N(7)-methylguanine-tRNA biosynthesis. Its function is as follows. Catalyzes the formation of N(7)-methylguanine at position 46 (m7G46) in tRNA. This is tRNA (guanine-N(7)-)-methyltransferase from Bordetella bronchiseptica (strain ATCC BAA-588 / NCTC 13252 / RB50) (Alcaligenes bronchisepticus).